A 371-amino-acid polypeptide reads, in one-letter code: uncharacterized protein (371 aa).

33-40 (GPLNSGKT) lines the ATP pocket.

The protein belongs to the archaeal ATPase family.

This is an uncharacterized protein from Methanocaldococcus jannaschii (strain ATCC 43067 / DSM 2661 / JAL-1 / JCM 10045 / NBRC 100440) (Methanococcus jannaschii).